Consider the following 498-residue polypeptide: Probable cytosol aminopeptidase (498 aa).

2 residues coordinate Mn(2+): K271 and D276. K283 is a catalytic residue. Positions 294, 353, and 355 each coordinate Mn(2+). Residue R357 is part of the active site.

The protein belongs to the peptidase M17 family. Requires Mn(2+) as cofactor.

It localises to the cytoplasm. The catalysed reaction is Release of an N-terminal amino acid, Xaa-|-Yaa-, in which Xaa is preferably Leu, but may be other amino acids including Pro although not Arg or Lys, and Yaa may be Pro. Amino acid amides and methyl esters are also readily hydrolyzed, but rates on arylamides are exceedingly low.. It catalyses the reaction Release of an N-terminal amino acid, preferentially leucine, but not glutamic or aspartic acids.. Presumably involved in the processing and regular turnover of intracellular proteins. Catalyzes the removal of unsubstituted N-terminal amino acids from various peptides. In Bordetella petrii (strain ATCC BAA-461 / DSM 12804 / CCUG 43448), this protein is Probable cytosol aminopeptidase.